The following is a 207-amino-acid chain: Coiled-coil domain-containing protein 25 (207 aa).

The Extracellular portion of the chain corresponds to 1–104; sequence MVFYFTSAVV…SNLKKTADMD (104 aa). The interval 20–24 is DNA-binding; the sequence is KDKYE. A helical membrane pass occupies residues 105–121; the sequence is IGQIGFHRQKEVKIVAV. Positions 112 to 189 form a coiled coil; the sequence is RQKEVKIVAV…EDLKNYTSLM (78 aa). The Cytoplasmic segment spans residues 122–207; sequence EKKINEIVNR…EDGYDSDDFM (86 aa). Residues 140 to 183 show a composition bias toward basic and acidic residues; the sequence is YPDLAAEKESRDREERNEKKAQIQEQKKKEKEEVKKKKEMEDLK. The interval 140–207 is disordered; that stretch reads YPDLAAEKES…EDGYDSDDFM (68 aa). The segment covering 184 to 198 has biased composition (polar residues); it reads NYTSLMKSDNMTTNE. A Phosphoserine modification is found at Ser203.

This sequence belongs to the CCDC25 family. Interacts (via cytoplasmic region) with ILK.

It localises to the cell membrane. The protein resides in the endomembrane system. Transmembrane receptor that senses neutrophil extracellular traps (NETs) and triggers the ILK-PARVB pathway to enhance cell motility. NETs are mainly composed of DNA fibers and are released by neutrophils to bind pathogens during inflammation. Specifically binds NETs on its extracellular region, in particular the 8-OHdG-enriched DNA present in NETs, and recruits ILK, initiating the ILK-PARVB cascade to induce cytoskeleton rearrangement and directional migration of cells. The chain is Coiled-coil domain-containing protein 25 from Danio rerio (Zebrafish).